The chain runs to 518 residues: Bifunctional purine biosynthesis protein PurH (518 aa).

In terms of domain architecture, MGS-like spans 1 to 146 (MSPIALLSVS…KNHQDVLVVT (146 aa)).

The protein belongs to the PurH family.

It catalyses the reaction (6R)-10-formyltetrahydrofolate + 5-amino-1-(5-phospho-beta-D-ribosyl)imidazole-4-carboxamide = 5-formamido-1-(5-phospho-D-ribosyl)imidazole-4-carboxamide + (6S)-5,6,7,8-tetrahydrofolate. The enzyme catalyses IMP + H2O = 5-formamido-1-(5-phospho-D-ribosyl)imidazole-4-carboxamide. It participates in purine metabolism; IMP biosynthesis via de novo pathway; 5-formamido-1-(5-phospho-D-ribosyl)imidazole-4-carboxamide from 5-amino-1-(5-phospho-D-ribosyl)imidazole-4-carboxamide (10-formyl THF route): step 1/1. The protein operates within purine metabolism; IMP biosynthesis via de novo pathway; IMP from 5-formamido-1-(5-phospho-D-ribosyl)imidazole-4-carboxamide: step 1/1. The protein is Bifunctional purine biosynthesis protein PurH of Prochlorococcus marinus (strain NATL1A).